Consider the following 812-residue polypeptide: Fibrous sheath CABYR-binding protein (812 aa).

The segment at 1–66 (MEESDEPEQP…SIGNIPGGKA (66 aa)) is disordered. A phosphoserine mark is found at Ser-25, Ser-57, Ser-125, Ser-133, Ser-184, and Ser-273. 4 disordered regions span residues 269–333 (IQAP…PKGT), 367–388 (DSGR…PPLS), 424–547 (FEDQ…PPSL), and 672–741 (PAEE…PSVK). Residues 275 to 286 (AKETSAAETTAK) show a composition bias toward low complexity. Residues 488–501 (EVPPLPTEEWPLPP) are compositionally biased toward pro residues. Positions 502 to 513 (VTEESPAEVTPP) are enriched in low complexity. The span at 514 to 528 (ETEEGPIEPAEEGPE) shows a compositional bias: acidic residues.

Interacts with CABYR.

It is found in the cell projection. It localises to the cilium. The protein localises to the flagellum. May be involved in the later stages of fibrous sheath biogenesis. Binds calcium. The chain is Fibrous sheath CABYR-binding protein from Rattus norvegicus (Rat).